A 305-amino-acid polypeptide reads, in one-letter code: Olfactory receptor 4F17 (305 aa).

The Extracellular portion of the chain corresponds to 1 to 18; it reads MVTEFIFLGLSDSQGLQT. A helical transmembrane segment spans residues 19–42; the sequence is FLFMLFFVFYGGIVFGNLLIVITV. Topologically, residues 43 to 50 are cytoplasmic; sequence VSDSHLHS. The chain crosses the membrane as a helical span at residues 51 to 72; the sequence is PMYFLLANLSLIDLSLSSVTAP. The Extracellular segment spans residues 73–93; it reads KMITDFFSQRKVISFKGCLVQ. The cysteines at positions 90 and 182 are disulfide-linked. A helical membrane pass occupies residues 94–113; sequence IFLLHFFGGSEMVILIAMGF. The Cytoplasmic segment spans residues 114–132; the sequence is DRYIAICKPLHYTTIMCGN. A helical transmembrane segment spans residues 133–151; that stretch reads ACVGIMAVAWGIGFLHSVS. Residues 152–188 are Extracellular-facing; the sequence is QLAFAVHLPFCGPNEVDSFYCDLPRVIKLACTDTYRL. Residues 189–212 form a helical membrane-spanning segment; the sequence is DIMVIANSGVLTVCSFVLLIISYT. Residues 213–228 are Cytoplasmic-facing; sequence IILMTIQHRPLDKSSK. Residues 229 to 251 traverse the membrane as a helical segment; that stretch reads ALSTLTAHITVVLLFFGPCVFIY. The Extracellular segment spans residues 252 to 262; it reads AWPFPIKSLDK. The chain crosses the membrane as a helical span at residues 263–282; it reads FLAVFYSVITPLLNPIIYTL. Over 283 to 305 the chain is Cytoplasmic; sequence RNKDMKTAIRQLRKWDAHSSVKF.

This sequence belongs to the G-protein coupled receptor 1 family.

It localises to the cell membrane. Its function is as follows. Odorant receptor. This Homo sapiens (Human) protein is Olfactory receptor 4F17 (OR4F17).